The following is a 674-amino-acid chain: 1,4-alpha-glucan branching enzyme GlgB 1 (674 aa).

Asp-336 functions as the Nucleophile in the catalytic mechanism. Glu-389 (proton donor) is an active-site residue.

It belongs to the glycosyl hydrolase 13 family. GlgB subfamily. Monomer.

It catalyses the reaction Transfers a segment of a (1-&gt;4)-alpha-D-glucan chain to a primary hydroxy group in a similar glucan chain.. Its pathway is glycan biosynthesis; glycogen biosynthesis. Functionally, catalyzes the formation of the alpha-1,6-glucosidic linkages in glycogen by scission of a 1,4-alpha-linked oligosaccharide from growing alpha-1,4-glucan chains and the subsequent attachment of the oligosaccharide to the alpha-1,6 position. In Clostridium perfringens (strain SM101 / Type A), this protein is 1,4-alpha-glucan branching enzyme GlgB 1.